A 381-amino-acid chain; its full sequence is Pulmonary surfactant-associated protein B (381 aa).

The N-terminal stretch at 1-24 (MAESHLLQWLLLLLPTLCGPGTAA) is a signal peptide. The region spanning 25–65 (WTTSSLACAQGPEFWCQSLEQALQCRALGHCLQEVWGHVGA) is the Saposin A-type domain. The propeptide occupies 25–200 (WTTSSLACAQ…PHTQDLSEQQ (176 aa)). Saposin B-type domains lie at 65–147 (ADDL…KSRQ), 204–281 (PLPY…SMDD), and 295–370 (RDSE…GTMS). 9 disulfide bridges follow: cysteine 69/cysteine 143, cysteine 72/cysteine 137, cysteine 100/cysteine 112, cysteine 208/cysteine 277, cysteine 211/cysteine 271, cysteine 235/cysteine 246, cysteine 299/cysteine 366, cysteine 302/cysteine 360, and cysteine 325/cysteine 335. The N-linked (GlcNAc...) asparagine glycan is linked to asparagine 129. The propeptide occupies 280-381 (DDSAGPRSPT…PLQCIHSPDL (102 aa)). Asparagine 311 carries N-linked (GlcNAc...) asparagine glycosylation.

Homodimer; disulfide-linked.

The protein localises to the secreted. It is found in the extracellular space. Its subcellular location is the surface film. In terms of biological role, pulmonary surfactant-associated proteins promote alveolar stability by lowering the surface tension at the air-liquid interface in the peripheral air spaces. SP-B increases the collapse pressure of palmitic acid to nearly 70 millinewtons per meter. In Homo sapiens (Human), this protein is Pulmonary surfactant-associated protein B (SFTPB).